Here is a 492-residue protein sequence, read N- to C-terminus: Tyrosine--tRNA ligase, mitochondrial (492 aa).

An L-tyrosine-binding site is contributed by Y89. An ATP-binding site is contributed by D93. The 'HIGH' region motif lies at 94–103 (PTAQSLHLGN). Positions 133, 239, 243, 246, and 265 each coordinate L-tyrosine. Residues 303–307 (KFGKS) carry the 'KMSKS' region motif. K306 serves as a coordination point for ATP.

This sequence belongs to the class-I aminoacyl-tRNA synthetase family. Homodimer.

It is found in the mitochondrion matrix. The catalysed reaction is tRNA(Tyr) + L-tyrosine + ATP = L-tyrosyl-tRNA(Tyr) + AMP + diphosphate + H(+). Its function is as follows. Catalyzes the attachment of tyrosine to tRNA(Tyr) in a two-step reaction: tyrosine is first activated by ATP to form Tyr-AMP and then transferred to the acceptor end of tRNA(Tyr). The protein is Tyrosine--tRNA ligase, mitochondrial (MSY1) of Saccharomyces cerevisiae (strain ATCC 204508 / S288c) (Baker's yeast).